A 526-amino-acid polypeptide reads, in one-letter code: ATP synthase subunit alpha (526 aa).

Position 174–181 (G174–T181) interacts with ATP. Positions F505–E520 are enriched in basic and acidic residues. The segment at F505 to G526 is disordered.

This sequence belongs to the ATPase alpha/beta chains family. F-type ATPases have 2 components, CF(1) - the catalytic core - and CF(0) - the membrane proton channel. CF(1) has five subunits: alpha(3), beta(3), gamma(1), delta(1), epsilon(1). CF(0) has three main subunits: a(1), b(2) and c(9-12). The alpha and beta chains form an alternating ring which encloses part of the gamma chain. CF(1) is attached to CF(0) by a central stalk formed by the gamma and epsilon chains, while a peripheral stalk is formed by the delta and b chains.

It localises to the cell membrane. It carries out the reaction ATP + H2O + 4 H(+)(in) = ADP + phosphate + 5 H(+)(out). In terms of biological role, produces ATP from ADP in the presence of a proton gradient across the membrane. The alpha chain is a regulatory subunit. The polypeptide is ATP synthase subunit alpha (Rubrobacter xylanophilus (strain DSM 9941 / JCM 11954 / NBRC 16129 / PRD-1)).